The chain runs to 247 residues: NAD-dependent protein deacetylase 2 (247 aa).

The Deacetylase sirtuin-type domain maps to 1–247 (MDQIRQLAQW…ASVRKQIQAE (247 aa)). NAD(+)-binding residues include Ala-23, Thr-27, Phe-34, Arg-35, Gln-103, Ile-105, Asp-106, and His-121. Residue Phe-34 coordinates nicotinamide. Positions 105 and 106 each coordinate nicotinamide. Residue His-121 is the Proton acceptor of the active site. Residues Cys-129, Cys-132, Cys-149, and Cys-152 each contribute to the Zn(2+) site. Residues Thr-188, Ser-189, Asn-215, and Ile-233 each coordinate NAD(+).

It belongs to the sirtuin family. Class U subfamily. Requires Zn(2+) as cofactor.

The protein resides in the cytoplasm. The enzyme catalyses N(6)-acetyl-L-lysyl-[protein] + NAD(+) + H2O = 2''-O-acetyl-ADP-D-ribose + nicotinamide + L-lysyl-[protein]. In terms of biological role, NAD-dependent protein deacetylase which modulates the activities of several enzymes which are inactive in their acetylated form. The protein is NAD-dependent protein deacetylase 2 of Geobacillus kaustophilus (strain HTA426).